A 1056-amino-acid chain; its full sequence is Contactin-5 (1056 aa).

A compositionally biased stretch (low complexity) spans 1 to 14; it reads MKADSSSSSSMSSR. Residues 1–33 are disordered; it reads MKADSSSSSSMSSRMRLRNSHGVGSSSQDWSPF. Over residues 22–31 the composition is skewed to polar residues; the sequence is GVGSSSQDWS. Ig-like C2-type domains lie at 57 to 142, 154 to 240, 258 to 343, 348 to 432, 438 to 519, and 527 to 622; these read PVFI…IVLS, PFSG…RVLS, PKIE…GHLQ, PQWI…AELK, PMFN…AELT, and PMRV…AELL. 3 disulfide bridges follow: Cys-81/Cys-131, Cys-175/Cys-227, and Cys-280/Cys-327. N-linked (GlcNAc...) asparagine glycosylation is found at Asn-96 and Asn-119. N-linked (GlcNAc...) asparagine glycosylation is present at Asn-355. 3 cysteine pairs are disulfide-bonded: Cys-369/Cys-416, Cys-459/Cys-507, and Cys-549/Cys-606. 2 N-linked (GlcNAc...) asparagine glycosylation sites follow: Asn-489 and Asn-496. 4 consecutive Fibronectin type-III domains span residues 629–727, 732–829, 834–928, and 933–1023; these read PPGV…TKEA, APAN…SAEG, PPSE…TKKN, and PPGN…TSSG. The tract at residues 711–736 is disordered; that stretch reads GTGDPSPPSRAVRTKEAVPSVAPANV. N-linked (GlcNAc...) asparagine glycosylation is found at Asn-772, Asn-887, Asn-945, and Asn-958. Asn-1035 is lipidated: GPI-anchor amidated asparagine. Positions 1036 to 1056 are cleaved as a propeptide — removed in mature form; that stretch reads SPPGLAWTALFLSLMVPSFPL.

Belongs to the immunoglobulin superfamily. Contactin family.

The protein localises to the cell membrane. Functionally, contactins mediate cell surface interactions during nervous system development. This is Contactin-5 (cntn5) from Danio rerio (Zebrafish).